The following is a 244-amino-acid chain: Lipid A 1-phosphatase (244 aa).

The next 6 helical transmembrane spans lie at Leu-28–Ala-48, Glu-60–Phe-80, Ala-98–Leu-118, Phe-154–Pro-174, Val-178–Tyr-198, and Asp-201–Ala-221.

The protein belongs to the lipid A LpxE 1-phosphatase family.

It localises to the cell inner membrane. Its pathway is bacterial outer membrane biogenesis; LPS lipid A biosynthesis. Its function is as follows. Removes the 1-phosphate group from (tetraacyl) lipid A species, has no requirement for the Kdo(2) moiety of lipid A. Has no 4'-phosphatase activity. Reduces sensitivity of S.meliloti strain 1021 to the cationic antimicrobial peptide (CAMP) polymyxin B. The polypeptide is Lipid A 1-phosphatase (Rhizobium johnstonii (strain DSM 114642 / LMG 32736 / 3841) (Rhizobium leguminosarum bv. viciae)).